The primary structure comprises 251 residues: Retinoic acid early-inducible protein 1-epsilon (251 aa).

The first 28 residues, 1-28 (MAKAAVTKRHHFMIQKLLILLSYGYTNG), serve as a signal peptide directing secretion. Cys37 and Cys56 are joined by a disulfide. N-linked (GlcNAc...) asparagine glycans are attached at residues Asn38, Asn70, Asn83, Asn141, and Asn154. Residues Cys88 and Cys188 are joined by a disulfide bond. Positions 196-228 (LKQSKEKPRSTSRSPSITQLTSTSPLPPPSHST) are disordered. The span at 209 to 219 (SPSITQLTSTS) shows a compositional bias: low complexity. Ser225 carries GPI-anchor amidated serine lipidation. The propeptide at 226–251 (HSTSKKGFISVGLIFISLLFAFAFAM) is removed in mature form.

The protein belongs to the NKG2D ligand family. Glycosylated.

Its subcellular location is the cell membrane. Functionally, acts as a ligand for KLRK1. This is Retinoic acid early-inducible protein 1-epsilon (Raet1e) from Mus musculus (Mouse).